We begin with the raw amino-acid sequence, 155 residues long: SsrA-binding protein (155 aa).

It belongs to the SmpB family.

The protein resides in the cytoplasm. Functionally, required for rescue of stalled ribosomes mediated by trans-translation. Binds to transfer-messenger RNA (tmRNA), required for stable association of tmRNA with ribosomes. tmRNA and SmpB together mimic tRNA shape, replacing the anticodon stem-loop with SmpB. tmRNA is encoded by the ssrA gene; the 2 termini fold to resemble tRNA(Ala) and it encodes a 'tag peptide', a short internal open reading frame. During trans-translation Ala-aminoacylated tmRNA acts like a tRNA, entering the A-site of stalled ribosomes, displacing the stalled mRNA. The ribosome then switches to translate the ORF on the tmRNA; the nascent peptide is terminated with the 'tag peptide' encoded by the tmRNA and targeted for degradation. The ribosome is freed to recommence translation, which seems to be the essential function of trans-translation. The polypeptide is SsrA-binding protein (Halothermothrix orenii (strain H 168 / OCM 544 / DSM 9562)).